The chain runs to 313 residues: tRNA dimethylallyltransferase (313 aa).

17–24 contributes to the ATP binding site; the sequence is GPTASGKT. Position 19-24 (19-24) interacts with substrate; sequence TASGKT. Interaction with substrate tRNA regions lie at residues 42-45, 166-170, 247-252, and 280-287; these read DSAL, QRLSR, RCVGYR, and KRQITWLR.

Belongs to the IPP transferase family. As to quaternary structure, monomer. Mg(2+) is required as a cofactor.

The enzyme catalyses adenosine(37) in tRNA + dimethylallyl diphosphate = N(6)-dimethylallyladenosine(37) in tRNA + diphosphate. Catalyzes the transfer of a dimethylallyl group onto the adenine at position 37 in tRNAs that read codons beginning with uridine, leading to the formation of N6-(dimethylallyl)adenosine (i(6)A). The sequence is that of tRNA dimethylallyltransferase from Proteus mirabilis (strain HI4320).